The chain runs to 121 residues: uncharacterized protein (121 aa).

Disordered regions lie at residues 1–28 (MGCA…QNGD) and 60–82 (QENL…VPGL). Phosphoserine occurs at positions 95 and 115.

Expressed in spleen, prostate, testis and uterus.

This is an uncharacterized protein from Homo sapiens (Human).